The primary structure comprises 762 residues: 1-phosphatidylinositol 4,5-bisphosphate phosphodiesterase delta-4 (762 aa).

Residues 16-124 (LLMQEGMPMR…WMRGLQLLVD (109 aa)) form the PH domain. The substrate binding stretch occupies residues 26 to 53 (KVRSKSWKKLRYFRLQNDGMTVWHARQA). EF-hand domains are found at residues 134 to 169 (RLDQ…MNVE), 170 to 205 (MDQE…LTKR), and 206 to 237 (AEVQ…EQKE). Residues Asp147, Asn149, Asp151, Lys153, Glu158, Asp183, Ser185, Ser187, Thr189, and Glu194 each contribute to the Ca(2+) site. The GBA motif lies at 213–243 (ESFSADGQKLTLLEFLDFLQEEQKERDCTSE). The 146-residue stretch at 290–435 (QDMTQPLNHY…LRRKILVKGK (146 aa)) folds into the PI-PLC X-box domain. The active site involves His305. Ca(2+) contacts are provided by Asn306, Glu335, and Asp337. Residue His350 is part of the active site. Residue Glu384 coordinates Ca(2+). 2 residues coordinate substrate: Lys433 and Lys435. The segment covering 443 to 471 (LEYEEEEAEPELEESELALESQFETEPEP) has biased composition (acidic residues). Residues 443 to 483 (LEYEEEEAEPELEESELALESQFETEPEPQEQNLQNKDKKK) are disordered. At Ser457 the chain carries Phosphoserine. Residues 493–609 (LSSLVIYLKS…GYVLKPDFLR (117 aa)) form the PI-PLC Y-box domain. 2 residues coordinate substrate: Ser522 and Arg549. The 128-residue stretch at 609 to 736 (RDIQSSFHPE…QGYRHIHLLS (128 aa)) folds into the C2 domain. Ca(2+)-binding residues include Ile650, Asp652, Asn676, Asp705, Tyr706, and Asp707. The PDZ-binding signature appears at 731–734 (HIHL).

Interacts with GRIP1. As to quaternary structure, interacts (via GBA motif) with guanine nucleotide-binding protein G(i) alpha subunit GNAI3 (inactive GDP-bound form); high-affinity interaction. In terms of assembly, interacts (via GBA motif) with guanine nucleotide-binding protein G(i) alpha subunit GNAI3 (inactive GDP-bound form); low-affinity interaction. Ca(2+) serves as cofactor. Highly expressed in skeletal muscle and kidney tissues, and at moderate level in intestinal tissue. Expressed in corneal epithelial cells.

Its subcellular location is the membrane. It is found in the nucleus. It localises to the cytoplasm. The protein resides in the endoplasmic reticulum. It catalyses the reaction a 1,2-diacyl-sn-glycero-3-phospho-(1D-myo-inositol-4,5-bisphosphate) + H2O = 1D-myo-inositol 1,4,5-trisphosphate + a 1,2-diacyl-sn-glycerol + H(+). The catalysed reaction is a 1,2-diacyl-sn-glycero-3-phospho-(1D-myo-inositol) + H2O = 1D-myo-inositol 1-phosphate + a 1,2-diacyl-sn-glycerol + H(+). Functionally, hydrolyzes the phosphatidylinositol 4,5-bisphosphate (PIP2) to generate 2 second messenger molecules diacylglycerol (DAG) and inositol 1,4,5-trisphosphate (IP3). DAG mediates the activation of protein kinase C (PKC), while IP3 releases Ca(2+) from intracellular stores. Required for acrosome reaction in sperm during fertilization, probably by acting as an important enzyme for intracellular Ca(2+) mobilization in the zona pellucida-induced acrosome reaction. May play a role in cell growth. Modulates the liver regeneration in cooperation with nuclear PKC. Overexpression up-regulates the Erk signaling pathway and proliferation. Its function is as follows. Acts as a non-receptor guanine nucleotide exchange factor which binds to and activates guanine nucleotide-binding protein (G-protein) alpha subunit GNAI3. The sequence is that of 1-phosphatidylinositol 4,5-bisphosphate phosphodiesterase delta-4 from Homo sapiens (Human).